A 165-amino-acid chain; its full sequence is E3 ubiquitin-protein ligase RNF181 (165 aa).

Residues 88–129 (CPVCLLEFEAEETVIEMPCHHLFHSNCILPWLSKTNSCPLCR) form an RING-type; atypical zinc finger. Positions 136-165 (DDSYEEHKKDKARRQQQQHRLENLHGAMYT) are disordered. Residue T165 is modified to Phosphothreonine.

This sequence belongs to the RNF181 family. In terms of assembly, directly interacts with ITGA2B and, as a result, with integrin ITGA2B/ITGB3. There is no evidence that integrin ITGA2B/ITGB3 is an endogenous substrate for RNF181-directed ubiquitination. Auto-ubiquitinated as part of the enzymatic reaction.

It carries out the reaction S-ubiquitinyl-[E2 ubiquitin-conjugating enzyme]-L-cysteine + [acceptor protein]-L-lysine = [E2 ubiquitin-conjugating enzyme]-L-cysteine + N(6)-ubiquitinyl-[acceptor protein]-L-lysine.. It participates in protein modification; protein ubiquitination. Its function is as follows. E3 ubiquitin-protein ligase which accepts ubiquitin from an E2 ubiquitin-conjugating enzyme in the form of a thioester and then directly transfers the ubiquitin to targeted substrates. Catalyzes monoubiquitination of 26S proteasome subunit PSMC2/RPT1. The sequence is that of E3 ubiquitin-protein ligase RNF181 from Mus musculus (Mouse).